The sequence spans 418 residues: Tol-Pal system protein TolB (418 aa).

Residues 1–21 form the signal peptide; that stretch reads MKLFVQLVLFISLFIPYSTKA.

Belongs to the TolB family. In terms of assembly, the Tol-Pal system is composed of five core proteins: the inner membrane proteins TolA, TolQ and TolR, the periplasmic protein TolB and the outer membrane protein Pal. They form a network linking the inner and outer membranes and the peptidoglycan layer.

The protein localises to the periplasm. In terms of biological role, part of the Tol-Pal system, which plays a role in outer membrane invagination during cell division and is important for maintaining outer membrane integrity. This Wolbachia pipientis subsp. Culex pipiens (strain wPip) protein is Tol-Pal system protein TolB.